The following is a 105-amino-acid chain: Small ribosomal subunit protein eS24 (105 aa).

Belongs to the eukaryotic ribosomal protein eS24 family.

This chain is Small ribosomal subunit protein eS24, found in Haloquadratum walsbyi (strain DSM 16790 / HBSQ001).